Consider the following 246-residue polypeptide: 5'-nucleotidase SurE (246 aa).

Positions 8, 9, 39, and 91 each coordinate a divalent metal cation.

The protein belongs to the SurE nucleotidase family. The cofactor is a divalent metal cation.

It localises to the cytoplasm. The catalysed reaction is a ribonucleoside 5'-phosphate + H2O = a ribonucleoside + phosphate. Nucleotidase that shows phosphatase activity on nucleoside 5'-monophosphates. This is 5'-nucleotidase SurE from Histophilus somni (strain 129Pt) (Haemophilus somnus).